The primary structure comprises 201 residues: Ras-related protein Rab-1B (201 aa).

Met1 carries the post-translational modification N-acetylmethionine. Ser17, Gly18, Val19, Gly20, Lys21, Ser22, Cys23, Tyr33, Thr34, Glu35, Ser36, Ser39, and Thr40 together coordinate GTP. Residue Ser22 coordinates Mg(2+). The Switch 1 motif lies at 30–45 (DDTYTESYISTIGVDF). Mg(2+)-binding residues include Thr40 and Asp63. Residues 64-83 (TAGQERFRTITSSYYRGAHG) form a switch 2 region; required for interaction with REP1/CHM region. The short motif at 65-80 (AGQERFRTITSSYYRG) is the Switch 2 element. GTP is bound at residue Gly66. Ser76 is modified ((Microbial infection) O-(2-cholinephosphoryl)serine). Tyr77 carries the post-translational modification (Microbial infection) O-AMP-tyrosine. Asn121, Lys122, Asp124, Ser151, Ala152, and Lys153 together coordinate GTP. Residues 174–201 (GPGAASGGERPNLKIDSTPVKPAGGGCC) are disordered. S-geranylgeranyl cysteine attachment occurs at residues Cys200 and Cys201. Cys201 bears the Cysteine methyl ester mark.

This sequence belongs to the small GTPase superfamily. Rab family. As to quaternary structure, interacts with MICAL1 and MICAL2. Interacts (in GTP-bound form) with MICALCL, MICAL1 and MILCAL3. Interacts with GDI1; the interaction requires the GDP-bound state. Interacts with CHM/REP1; the interaction requires the GDP-bound form and is necessary for prenylation by GGTase II. Interacts with RabGAP TBC1D20. Interacts (in GDP-bound form) with lipid phosphatase MTMR6 (via GRAM domain); the interaction regulates MTMR6 recruitment to the endoplasmic reticulum-Golgi intermediate compartment. Interacts (in GDP-bound form) with lipid phosphatase MTMR7. In terms of assembly, (Microbial infection) Interacts with L.pneumophila AnkX. Interacts with L.pneumophila Lem3. Interacts with L.pneumophila SidD. Interacts with L.pneumophila DrrA. The cofactor is Mg(2+). Post-translationally, prenylated; by GGTase II, only after interaction of the substrate with Rab escort protein 1 (REP1). (Microbial infection) AMPylation at Tyr-77 by L.pneumophila DrrA occurs in the switch 2 region and leads to moderate inactivation of the GTPase activity. It appears to prolong the lifetime of the GTP state of RAB1B by restricting access of GTPase effectors to switch 2 and blocking effector-stimulated GTP hydrolysis, thereby rendering RAB1B constitutively active. It is later de-AMPylated by L.pneumophila SidD, releasing RAB1B from bacterial phagosomes. In terms of processing, (Microbial infection) Phosphocholinated at Ser-76 by L.pneumophila AnkX, leading to displace GDP dissociation inhibitors (GDI). Both GDP-bound and GTP-bound forms can be phosphocholinated. Dephosphocholinated by L.pneumophila Lem3, restoring accessibility to L.pneumophila GTPase effector LepB. Post-translationally, (Microbial infection) Glycosylated by S.typhimurium protein Ssek3: arginine GlcNAcylation prevents GTPase activity, thereby disrupting vesicular protein transport from the endoplasmic reticulum (ER) to the Golgi compartment.

It is found in the cytoplasm. It localises to the membrane. Its subcellular location is the preautophagosomal structure membrane. The protein resides in the perinuclear region. The catalysed reaction is GTP + H2O = GDP + phosphate + H(+). Regulated by guanine nucleotide exchange factors (GEFs) which promote the exchange of bound GDP for free GTP. Regulated by GTPase activating proteins (GAPs) including TBC1D20 which increases the GTP hydrolysis activity. Inhibited by GDP dissociation inhibitors (GDIs). Functionally, the small GTPases Rab are key regulators of intracellular membrane trafficking, from the formation of transport vesicles to their fusion with membranes. Rabs cycle between an inactive GDP-bound form and an active GTP-bound form that is able to recruit to membranes different set of downstream effectors directly responsible for vesicle formation, movement, tethering and fusion. Plays a role in the initial events of the autophagic vacuole development which take place at specialized regions of the endoplasmic reticulum. Regulates vesicular transport between the endoplasmic reticulum and successive Golgi compartments. Required to modulate the compacted morphology of the Golgi. Promotes the recruitment of lipid phosphatase MTMR6 to the endoplasmic reticulum-Golgi intermediate compartment. The polypeptide is Ras-related protein Rab-1B (Homo sapiens (Human)).